A 432-amino-acid polypeptide reads, in one-letter code: Glutamyl-tRNA reductase (432 aa).

Substrate-binding positions include 55–58 (TCNR), S114, 119–121 (ETQ), and Q125. C56 serves as the catalytic Nucleophile. 194–199 (GAGEMI) serves as a coordination point for NADP(+).

This sequence belongs to the glutamyl-tRNA reductase family. Homodimer.

The enzyme catalyses (S)-4-amino-5-oxopentanoate + tRNA(Glu) + NADP(+) = L-glutamyl-tRNA(Glu) + NADPH + H(+). It functions in the pathway porphyrin-containing compound metabolism; protoporphyrin-IX biosynthesis; 5-aminolevulinate from L-glutamyl-tRNA(Glu): step 1/2. Its function is as follows. Catalyzes the NADPH-dependent reduction of glutamyl-tRNA(Glu) to glutamate 1-semialdehyde (GSA). This Burkholderia thailandensis (strain ATCC 700388 / DSM 13276 / CCUG 48851 / CIP 106301 / E264) protein is Glutamyl-tRNA reductase.